The primary structure comprises 98 residues: Cell cycle protein GpsB (98 aa).

Residues leucine 34–threonine 71 are a coiled coil.

The protein belongs to the GpsB family. As to quaternary structure, forms polymers through the coiled coil domains. Interacts with PBP1, MreC and EzrA.

Its subcellular location is the cytoplasm. Divisome component that associates with the complex late in its assembly, after the Z-ring is formed, and is dependent on DivIC and PBP2B for its recruitment to the divisome. Together with EzrA, is a key component of the system that regulates PBP1 localization during cell cycle progression. Its main role could be the removal of PBP1 from the cell pole after pole maturation is completed. Also contributes to the recruitment of PBP1 to the division complex. Not essential for septum formation. In Geobacillus thermodenitrificans (strain NG80-2), this protein is Cell cycle protein GpsB.